The chain runs to 315 residues: Gamma-hemolysin component C (315 aa).

The first 29 residues, 1–29 (MLKNKILTTTLSVSLLAPLANPLLENAKA), serve as a signal peptide directing secretion.

This sequence belongs to the aerolysin family. As to quaternary structure, toxicity requires sequential binding and synergistic association of a class S and a class F component which form heterooligomeric complexes. HlgB (class F) associates with either hlgA thus forming an AB toxin or with hlgC thus forming a CB toxin.

Its subcellular location is the secreted. In terms of biological role, toxin that seems to act by forming pores in the membrane of the cell. Has a hemolytic and a leucotoxic activity. This Staphylococcus aureus (strain NCTC 8325 / PS 47) protein is Gamma-hemolysin component C (hlgC).